Reading from the N-terminus, the 271-residue chain is 1,4-dihydroxy-2-naphthoyl-CoA synthase (271 aa).

Substrate is bound by residues 71–75 (SGGDQ), Tyr-83, 115–119 (YAIGG), Thr-141, Ser-147, Tyr-244, and Lys-259. 140-142 (QTG) is a binding site for hydrogencarbonate. Residues 250 to 263 (KEGRDSFKEKRKPD) are compositionally biased toward basic and acidic residues. Positions 250 to 271 (KEGRDSFKEKRKPDFGQFPRFP) are disordered.

Belongs to the enoyl-CoA hydratase/isomerase family. MenB subfamily. Hydrogencarbonate serves as cofactor.

The enzyme catalyses 2-succinylbenzoyl-CoA + H(+) = 1,4-dihydroxy-2-naphthoyl-CoA + H2O. The protein operates within quinol/quinone metabolism; 1,4-dihydroxy-2-naphthoate biosynthesis; 1,4-dihydroxy-2-naphthoate from chorismate: step 6/7. It participates in quinol/quinone metabolism; menaquinone biosynthesis. Converts o-succinylbenzoyl-CoA (OSB-CoA) to 1,4-dihydroxy-2-naphthoyl-CoA (DHNA-CoA). This Bacillus subtilis (strain 168) protein is 1,4-dihydroxy-2-naphthoyl-CoA synthase.